Consider the following 201-residue polypeptide: Glycerol-3-phosphate acyltransferase (201 aa).

Transmembrane regions (helical) follow at residues 3–23, 53–73, 80–100, 115–135, and 153–175; these read LFAI…SAIL, WVAL…VWLG, HFEL…PIFF, IAPI…LIFF, and FYVW…LLIY.

This sequence belongs to the PlsY family. As to quaternary structure, probably interacts with PlsX.

The protein localises to the cell inner membrane. The catalysed reaction is an acyl phosphate + sn-glycerol 3-phosphate = a 1-acyl-sn-glycero-3-phosphate + phosphate. It functions in the pathway lipid metabolism; phospholipid metabolism. Its function is as follows. Catalyzes the transfer of an acyl group from acyl-phosphate (acyl-PO(4)) to glycerol-3-phosphate (G3P) to form lysophosphatidic acid (LPA). This enzyme utilizes acyl-phosphate as fatty acyl donor, but not acyl-CoA or acyl-ACP. This Pasteurella multocida (strain Pm70) protein is Glycerol-3-phosphate acyltransferase.